The primary structure comprises 309 residues: Glutaminase (309 aa).

Substrate is bound by residues Ser-64, Asn-114, Glu-160, Asn-167, Tyr-191, Tyr-243, and Val-261.

This sequence belongs to the glutaminase family. Homotetramer.

The catalysed reaction is L-glutamine + H2O = L-glutamate + NH4(+). The chain is Glutaminase from Rhizobium rhizogenes (strain K84 / ATCC BAA-868) (Agrobacterium radiobacter).